Reading from the N-terminus, the 290-residue chain is 30 kDa spicule matrix protein alpha (290 aa).

An N-terminal signal peptide occupies residues 1–20 (MRGFVYVLVCVLALASFSRA). The C-type lectin domain occupies 92-162 (ANMYCGQMHP…YTNWERMTAP (71 aa)). Asparagine 102 carries an N-linked (GlcNAc...) asparagine glycan.

Accumulates exclusively in mineralized tissues.

Functionally, matrix protein of the sea urchin embryo spicule. The function of the matrix proteins is to direct crystal growth in certain orientations and inhibit growth in others. The chain is 30 kDa spicule matrix protein alpha (SM30A) from Strongylocentrotus purpuratus (Purple sea urchin).